The chain runs to 305 residues: MHIHVLGSAAGGGFPQWNCNCPNCDGLRKGTIKAKKRTQSSICVSADGINWVLFNTSPDILQQIQEFAPLQPGRAIRDSGIVGIVLIDAQIDHTTGLLMLREGQVKREIYCTDMVYQDLTTGNPLLNILDHYCGVNRHDIPIDGKHSFSVEHAPGLRFTAVALKSAAPPYSPHRHDPHPGDTIGVLIEDLNNGKKAFYAPGLGEIEPHLPALMEQADCIMVDGTFWTDTEMLDMGLMSKKARDIGHNPQSGPGGMMEVLDGYPGARRVLIHINNTNPILREDSAERVELTRRGIEVAYDGMDIIL.

This sequence belongs to the PqqB family.

It functions in the pathway cofactor biosynthesis; pyrroloquinoline quinone biosynthesis. Its function is as follows. May be involved in the transport of PQQ or its precursor to the periplasm. In Methylobacillus flagellatus (strain ATCC 51484 / DSM 6875 / VKM B-1610 / KT), this protein is Coenzyme PQQ synthesis protein B.